We begin with the raw amino-acid sequence, 49 residues long: Large ribosomal subunit protein bL33A (49 aa).

This sequence belongs to the bacterial ribosomal protein bL33 family.

The protein is Large ribosomal subunit protein bL33A of Lactobacillus johnsonii (strain CNCM I-12250 / La1 / NCC 533).